Consider the following 289-residue polypeptide: MAGAKEIKTKIASVQSTQKITKAMEMVATSKMRKTQDRMAASRPYSETIRNVISHVSKASIGYKHPFLVEREVKKIGILVISTDRGMCGGLNVNLFKTILNQIKNWKEQNISTDLGLIGSKGISFFRSFGFNIKGQLSGLGDMPALEELIGVANTMFDAYRNGEIDAVYIAYNKFVNTMSQKPVVQQLVPLPESKDDHLNERQQTWDYLYEPEPKVLLDSLLVRYLESQIYQAVVDNLASEQAARMVAMKAATDNAGNLINDLRLVYNKARQASITNELNEIVAGAAAI.

It belongs to the ATPase gamma chain family. F-type ATPases have 2 components, CF(1) - the catalytic core - and CF(0) - the membrane proton channel. CF(1) has five subunits: alpha(3), beta(3), gamma(1), delta(1), epsilon(1). CF(0) has three main subunits: a, b and c.

The protein resides in the cell inner membrane. Functionally, produces ATP from ADP in the presence of a proton gradient across the membrane. The gamma chain is believed to be important in regulating ATPase activity and the flow of protons through the CF(0) complex. The polypeptide is ATP synthase gamma chain (Haemophilus influenzae (strain PittGG)).